Here is a 165-residue protein sequence, read N- to C-terminus: MANPSKRIINKKSKQASISSILNFFFFYIMEYFVAVDNETSLGVFTSMEQCEETMKQYPGLHYVVFKYMCPADAENTDVVYLIPSLTLHTPMFVDHCPNRTKQARHVLKKINLVFEEESIENWKVSVNTVFPHVHNRLTAPKLSIDEANEAVEKFLIQAGRLMSL.

Residues 16–36 (ASISSILNFFFFYIMEYFVAV) traverse the membrane as a helical segment.

Belongs to the asfivirus F165R family.

The protein resides in the host membrane. This is an uncharacterized protein from African swine fever virus (isolate Tick/Malawi/Lil 20-1/1983) (ASFV).